The chain runs to 113 residues: Bactofilin BacN (113 aa).

Belongs to the bactofilin family. As to quaternary structure, interacts with BacO and BacP, the 3 proteins colocalize as an extended structure.

Its subcellular location is the cytoplasm. The protein localises to the cytoskeleton. Functionally, a non-essential component of the chromosome segregation machinery. Positions the ParA-ParB-parS chromosome segregation machinery within the cell; BacP seems to be the most important bactofilin in this process. Forms a heteropolymeric, subpolar scaffold in the cell; BacP probably forms the core, BacO contributes to position and integrity while BacN does not seem to contribute to assembly. The chain is Bactofilin BacN from Myxococcus xanthus (strain DK1622).